The following is a 221-amino-acid chain: Translation initiation factor 6 (221 aa).

This sequence belongs to the eIF-6 family.

In terms of biological role, binds to the 50S ribosomal subunit and prevents its association with the 30S ribosomal subunit to form the 70S initiation complex. The chain is Translation initiation factor 6 from Halorubrum lacusprofundi (strain ATCC 49239 / DSM 5036 / JCM 8891 / ACAM 34).